Consider the following 351-residue polypeptide: Blue-sensitive opsin (351 aa).

The Extracellular segment spans residues 1-40 (MKQVPEFHEDFYIPIPLDINNLSAYSPFLVPQDHLGNQGI). Residue asparagine 21 is glycosylated (N-linked (GlcNAc...) asparagine). The helical transmembrane segment at 41–65 (FMAMSVFMFFIFIGGASINILTILC) threads the bilayer. The Cytoplasmic portion of the chain corresponds to 66–77 (TIQFKKLRSHLN). A helical transmembrane segment spans residues 78-103 (YILVNLSIANLFVAIFGSPLSFYSFF). Residues 104 to 117 (NRYFIFGATACKIE) are Extracellular-facing. Cysteine 114 and cysteine 191 form a disulfide bridge. The chain crosses the membrane as a helical span at residues 118–137 (GFLATLGGMVGLWSLAVVAF). At 138-156 (ERWLVICKPLGNFTFKTPH) the chain is on the cytoplasmic side. The chain crosses the membrane as a helical span at residues 157–180 (AIAGCILPWISALAASLPPLFGWS). The Extracellular segment spans residues 181 to 206 (RYIPEGLQCSCGPDWYTTNNKYNNES). A helical membrane pass occupies residues 207 to 234 (YVMFLFCFCFAVPFGTIVFCYGQLLITL). The Cytoplasmic segment spans residues 235–256 (KLAAKAQADSASTQKAEREVTK). The chain crosses the membrane as a helical span at residues 257–280 (MVVVMVLGFLVCWAPYASFSLWIV). At 281–288 (SHRGEEFD) the chain is on the extracellular side. Residues 289-313 (LRMATIPSCLSKASTVYNPVIYVLM) form a helical membrane-spanning segment. Lysine 300 bears the N6-(retinylidene)lysine mark. The Cytoplasmic segment spans residues 314 to 351 (NKQFRSCMMKMVCGKNIEEDEASTSSQVTQVSSVAPEK).

This sequence belongs to the G-protein coupled receptor 1 family. Opsin subfamily. In terms of processing, phosphorylated on some or all of the serine and threonine residues present in the C-terminal region. As to expression, the color pigments are found in the cone photoreceptor cells.

Its subcellular location is the membrane. Visual pigments are the light-absorbing molecules that mediate vision. They consist of an apoprotein, opsin, covalently linked to cis-retinal. This is Blue-sensitive opsin from Carassius auratus (Goldfish).